We begin with the raw amino-acid sequence, 142 residues long: Hemoglobin subunit alpha-A (142 aa).

The Globin domain occupies 2–142; it reads VLSAADKTNV…VGAVLTAKYR (141 aa). H59 lines the O2 pocket. H88 contributes to the heme b binding site.

It belongs to the globin family. As to quaternary structure, heterotetramer of two alpha chains and two beta chains. In terms of tissue distribution, red blood cells.

Involved in oxygen transport from the lung to the various peripheral tissues. This is Hemoglobin subunit alpha-A (HBAA) from Anas platyrhynchos platyrhynchos (Northern mallard).